Reading from the N-terminus, the 581-residue chain is Lipoprotein LpqB (581 aa).

The first 23 residues, 1–23 (MRNHVSRYLTALIAVGCAATTAA), serve as a signal peptide directing secretion. C24 is lipidated: N-palmitoyl cysteine. C24 carries S-diacylglycerol cysteine lipidation.

It belongs to the LpqB lipoprotein family.

The protein localises to the cell membrane. This chain is Lipoprotein LpqB, found in Corynebacterium diphtheriae (strain ATCC 700971 / NCTC 13129 / Biotype gravis).